The chain runs to 396 residues: Phosphoglycerate kinase (396 aa).

Substrate is bound by residues 22–24 (DLN), R37, 60–63 (HFGR), R118, and R151. Residues K201, E323, and 353 to 356 (GGDT) contribute to the ATP site.

It belongs to the phosphoglycerate kinase family. As to quaternary structure, monomer.

Its subcellular location is the cytoplasm. It catalyses the reaction (2R)-3-phosphoglycerate + ATP = (2R)-3-phospho-glyceroyl phosphate + ADP. It functions in the pathway carbohydrate degradation; glycolysis; pyruvate from D-glyceraldehyde 3-phosphate: step 2/5. This is Phosphoglycerate kinase from Azorhizobium caulinodans (strain ATCC 43989 / DSM 5975 / JCM 20966 / LMG 6465 / NBRC 14845 / NCIMB 13405 / ORS 571).